We begin with the raw amino-acid sequence, 946 residues long: Bifunctional glutamine synthetase adenylyltransferase/adenylyl-removing enzyme (946 aa).

The tract at residues Met-1 to Glu-440 is adenylyl removase. The adenylyl transferase stretch occupies residues Ser-449 to Glu-946.

Belongs to the GlnE family. It depends on Mg(2+) as a cofactor.

It carries out the reaction [glutamine synthetase]-O(4)-(5'-adenylyl)-L-tyrosine + phosphate = [glutamine synthetase]-L-tyrosine + ADP. The catalysed reaction is [glutamine synthetase]-L-tyrosine + ATP = [glutamine synthetase]-O(4)-(5'-adenylyl)-L-tyrosine + diphosphate. Its function is as follows. Involved in the regulation of glutamine synthetase GlnA, a key enzyme in the process to assimilate ammonia. When cellular nitrogen levels are high, the C-terminal adenylyl transferase (AT) inactivates GlnA by covalent transfer of an adenylyl group from ATP to specific tyrosine residue of GlnA, thus reducing its activity. Conversely, when nitrogen levels are low, the N-terminal adenylyl removase (AR) activates GlnA by removing the adenylyl group by phosphorolysis, increasing its activity. The regulatory region of GlnE binds the signal transduction protein PII (GlnB) which indicates the nitrogen status of the cell. In Escherichia coli O127:H6 (strain E2348/69 / EPEC), this protein is Bifunctional glutamine synthetase adenylyltransferase/adenylyl-removing enzyme.